The following is a 251-amino-acid chain: uncharacterized protein (251 aa).

In terms of domain architecture, N-acetyltransferase spans 4–152 (IEITKDNIED…YFQLMALTWN (149 aa)).

The protein belongs to the acetyltransferase family.

This is an uncharacterized protein from Bacillus subtilis (strain 168).